The following is a 465-amino-acid chain: Deoxyguanosinetriphosphate triphosphohydrolase-like protein (465 aa).

Positions 1 to 22 are disordered; the sequence is MKWDKLLNDKRRRESGVTRSKN. Residues 63-252 form the HD domain; sequence RLTHSMEVST…LEVADDIAYL (190 aa).

Belongs to the dGTPase family. Type 3 subfamily.

In Listeria innocua serovar 6a (strain ATCC BAA-680 / CLIP 11262), this protein is Deoxyguanosinetriphosphate triphosphohydrolase-like protein.